A 335-amino-acid polypeptide reads, in one-letter code: Dolichyl-diphosphooligosaccharide--protein glycosyltransferase subunit MAGT1 (335 aa).

An N-terminal signal peptide occupies residues 1 to 29 (MAARWRFWCVSVTMVVALLIVCDVPSASA). Residues 30–184 (QRKKEMVLSE…DVNIRVIRPP (155 aa)) are Extracellular-facing. One can recognise a Thioredoxin domain in the interval 47–175 (WTNKRPVIRM…IARWIADRTD (129 aa)). Asn71 is a glycosylation site (N-linked (GlcNAc...) asparagine). Cysteines 87 and 90 form a disulfide. Residues 185–205 (NYAGPLMLGLLLAVIGGLVYL) form a helical membrane-spanning segment. At 206-209 (RRSN) the chain is on the cytoplasmic side. A helical transmembrane segment spans residues 210 to 230 (MEFLFNKTGWAFAALCFVLAM). Residues 231-270 (TSGQMWNHIRGPPYAHKNPHTGHVNYIHGSSQAQFVAETH) are Extracellular-facing. Residues 271 to 291 (IVLLFNGGVTLGMVLLCEAAT) form a helical membrane-spanning segment. The Cytoplasmic portion of the chain corresponds to 292–300 (SDMDIGKRK). The chain crosses the membrane as a helical span at residues 301–321 (IMCVAGIGLVVLFFSWMLSIF). Topologically, residues 322–335 (RSKYHGYPYSFLMS) are extracellular.

The protein belongs to the OST3/OST6 family. In terms of assembly, accessory component of the STT3B-containing form of the oligosaccharyltransferase (OST) complex. OST exists in two different complex forms which contain common core subunits RPN1, RPN2, OST48, OST4, DAD1 and TMEM258, either STT3A or STT3B as catalytic subunits, and form-specific accessory subunits. OST can form stable complexes with the Sec61 complex or with both the Sec61 and TRAP complexes. The association of TUSC3 or MAGT1 with the STT3B-containing complex seems to be mutually exclusvice. In terms of tissue distribution, ubiquitous. Expressed at very low levels in brain, lung and kidney.

It is found in the cell membrane. Its subcellular location is the endoplasmic reticulum. The protein resides in the endoplasmic reticulum membrane. Its pathway is protein modification; protein glycosylation. In terms of biological role, accessory component of the STT3B-containing form of the N-oligosaccharyl transferase (OST) complex which catalyzes the transfer of a high mannose oligosaccharide from a lipid-linked oligosaccharide donor to an asparagine residue within an Asn-X-Ser/Thr consensus motif in nascent polypeptide chains. Involved in N-glycosylation of STT3B-dependent substrates. Specifically required for the glycosylation of a subset of acceptor sites that are near cysteine residues; in this function seems to act redundantly with TUSC3. In its oxidized form proposed to form transient mixed disulfides with a glycoprotein substrate to facilitate access of STT3B to the unmodified acceptor site. Also has oxidoreductase-independent functions in the STT3B-containing OST complex possibly involving substrate recognition. Could indirectly play a role in Mg(2+) transport in epithelial cells. The chain is Dolichyl-diphosphooligosaccharide--protein glycosyltransferase subunit MAGT1 from Homo sapiens (Human).